We begin with the raw amino-acid sequence, 105 residues long: Anti-sigma factor RsrA (105 aa).

Residues Cys-11, His-37, Cys-41, and Cys-44 each contribute to the Zn(2+) site. An intrachain disulfide couples Cys-11 to Cys-44. Positions Lys-33–Lys-47 are contributes to redox-sensitivity. A disordered region spans residues Gln-86–Ser-105. Positions Ala-94 to Ser-105 are enriched in low complexity.

Belongs to the zinc-associated anti-sigma factor (ZAS) superfamily. As to quaternary structure, interacts with cognate sigma factor SigR under reducing but not oxiding conditions. Treatment with the thiol-oxidzing agent diamide inhibits the interaction, while incubation with thioredoxin (trxA) stimulates the interaction. Zn(2+) is required as a cofactor. In terms of processing, under oxidizing conditions up to 3 disulfide bonds are formed. A single disulfide bond inhibits binding to SigR. Cys-11 forms a disulfide bond with either Cys-44 (the major bind) or Cys-41 (a minor bond).

A redox-regulated anti-sigma factor for extracytoplasmic function (ECF) sigma factor SigR, and a key sensor of disulfide stress. Holds SigR, its cognate ECF sigma factor, in an inactive form, inhibiting its sigma activity under reducing but not oxidizing conditions; oxidation and reduction of the anti-sigma factor is reversible. Mycothiol (MSH) is competent for reduction of RsrA, allowing it to bind to SigR. In conjunction with its cognate sigma factor SigR may sense the intracellular level of reduced MSH. Probably releases SigR during oxidative stress. This chain is Anti-sigma factor RsrA (rsrA), found in Streptomyces coelicolor (strain ATCC BAA-471 / A3(2) / M145).